Here is a 439-residue protein sequence, read N- to C-terminus: Xylose isomerase (439 aa).

Catalysis depends on residues His101 and Asp104. 7 residues coordinate Mg(2+): Glu232, Glu268, His271, Asp296, Asp307, Asp309, and Asp339.

The protein belongs to the xylose isomerase family. As to quaternary structure, homotetramer. Mg(2+) is required as a cofactor.

It localises to the cytoplasm. It carries out the reaction alpha-D-xylose = alpha-D-xylulofuranose. This chain is Xylose isomerase, found in Photobacterium profundum (strain SS9).